We begin with the raw amino-acid sequence, 91 residues long: Small ribosomal subunit protein uS17 (91 aa).

It belongs to the universal ribosomal protein uS17 family. As to quaternary structure, part of the 30S ribosomal subunit.

Its function is as follows. One of the primary rRNA binding proteins, it binds specifically to the 5'-end of 16S ribosomal RNA. The sequence is that of Small ribosomal subunit protein uS17 from Salinispora tropica (strain ATCC BAA-916 / DSM 44818 / JCM 13857 / NBRC 105044 / CNB-440).